The chain runs to 396 residues: Acetate kinase (396 aa).

Residue asparagine 8 coordinates Mg(2+). Lysine 15 contributes to the ATP binding site. Arginine 89 lines the substrate pocket. Catalysis depends on aspartate 146, which acts as the Proton donor/acceptor. ATP contacts are provided by residues 206 to 210 (HLGNG), 280 to 282 (DMR), and 328 to 332 (GVGEN). Glutamate 382 lines the Mg(2+) pocket.

This sequence belongs to the acetokinase family. In terms of assembly, homodimer. It depends on Mg(2+) as a cofactor. Requires Mn(2+) as cofactor.

It is found in the cytoplasm. The enzyme catalyses acetate + ATP = acetyl phosphate + ADP. It participates in metabolic intermediate biosynthesis; acetyl-CoA biosynthesis; acetyl-CoA from acetate: step 1/2. Its function is as follows. Catalyzes the formation of acetyl phosphate from acetate and ATP. Can also catalyze the reverse reaction. In Clavibacter sepedonicus (Clavibacter michiganensis subsp. sepedonicus), this protein is Acetate kinase.